Reading from the N-terminus, the 274-residue chain is NAD(P)H dehydrogenase [quinone] 1 (274 aa).

Residues histidine 12, 18–19, and glutamine 67 contribute to the FAD site; that span reads FN. Serine 82 carries the phosphoserine modification. 104–107 serves as a coordination point for FAD; that stretch reads LQWF. 126-128 is a binding site for substrate; that stretch reads AYT. Residues 148 to 151, tyrosine 156, and arginine 201 contribute to the FAD site; that span reads TTGG. The tract at residues 225–274 is important for apoenzyme conformational stability; that stretch reads PSSLFDLNFQAGFLMKKEVQDEEKNKKFGLSVGHHLGKSIPTDNQIKARK. Residues lysine 250 and lysine 251 each participate in a glycyl lysine isopeptide (Lys-Gly) (interchain with G-Cter in SUMO2) cross-link.

The protein belongs to the NAD(P)H dehydrogenase (quinone) family. In terms of assembly, homodimer. Interacts with PDLIM4 isoform 2; this interaction stabilizes PDLIM4 isoform 2 in response to oxidative stress and protects it from ubiquitin-independent degradation by the core 20S proteasome. Interacts with TP73 (via SAM domain); this interaction is NADH-dependent, stabilizes TP73 in response to oxidative stress and protects it from ubiquitin-independent degradation by the 20S proteasome. Interacts with TP53; this interaction is NADH-dependent, stabilizes TP53 in response to oxidative stress and protects it from ubiquitin-independent degradation by the 20S proteasome. FAD is required as a cofactor.

The protein resides in the cytoplasm. It localises to the cytosol. It catalyses the reaction a quinone + NADH + H(+) = a quinol + NAD(+). It carries out the reaction a quinone + NADPH + H(+) = a quinol + NADP(+). The enzyme catalyses ubiquinone-10 + NADH + H(+) = ubiquinol-10 + NAD(+). The catalysed reaction is menadione + NADH + H(+) = menadiol + NAD(+). With respect to regulation, inhibited by dicoumarol. Functionally, flavin-containing quinone reductase that catalyzes two-electron reduction of quinones to hydroquinones using either NADH or NADPH as electron donors. In a ping-pong kinetic mechanism, the electrons are sequentially transferred from NAD(P)H to flavin cofactor and then from reduced flavin to the quinone, bypassing the formation of semiquinone and reactive oxygen species. Regulates cellular redox state primarily through quinone detoxification. Reduces components of plasma membrane redox system such as coenzyme Q and vitamin quinones, producing antioxidant hydroquinone forms. In the process may function as superoxide scavenger to prevent hydroquinone oxidation and facilitate excretion. Alternatively, can activate quinones and their derivatives by generating redox reactive hydroquinones with DNA cross-linking antitumor potential. Acts as a gatekeeper of the core 20S proteasome known to degrade proteins with unstructured regions. Upon oxidative stress, interacts with tumor suppressors TP53 and TP73 in a NADH-dependent way and inhibits their ubiquitin-independent degradation by the 20S proteasome. This chain is NAD(P)H dehydrogenase [quinone] 1, found in Homo sapiens (Human).